The following is a 272-amino-acid chain: Methyl-CpG-binding domain-containing protein 2 (272 aa).

A compositionally biased stretch (polar residues) spans Met1–Pro15. Residues Met1–Leu24 form a disordered region. The CW-type zinc-finger motif lies at Cys53–Gln112. Positions Gln62–Cys104 match the MBD-associated domain (MAD) motif. Residues Cys63, Cys66, Cys92, and Cys104 each contribute to the Zn(2+) site. The region spanning Trp118–Pro192 is the MBD domain. The span at Leu236–Gln250 shows a compositional bias: polar residues. The segment at Leu236–Arg272 is disordered.

In terms of assembly, interacts (via MBD domain) with DDM1. In terms of tissue distribution, expressed in buds, flowers, stems, siliques and mature seeds.

Its subcellular location is the nucleus. In terms of biological role, probable transcriptional regulator. This is Methyl-CpG-binding domain-containing protein 2 (MBD2) from Arabidopsis thaliana (Mouse-ear cress).